Consider the following 408-residue polypeptide: Argininosuccinate synthase (408 aa).

ATP contacts are provided by residues 11 to 19 (AYSGGLDTS) and alanine 38. 2 residues coordinate L-citrulline: tyrosine 91 and serine 96. Residue glycine 121 participates in ATP binding. L-aspartate-binding residues include threonine 123, asparagine 127, and aspartate 128. Position 127 (asparagine 127) interacts with L-citrulline. L-citrulline contacts are provided by arginine 131, serine 182, serine 191, glutamate 267, and tyrosine 279.

It belongs to the argininosuccinate synthase family. Type 1 subfamily. As to quaternary structure, homotetramer.

The protein resides in the cytoplasm. The enzyme catalyses L-citrulline + L-aspartate + ATP = 2-(N(omega)-L-arginino)succinate + AMP + diphosphate + H(+). It functions in the pathway amino-acid biosynthesis; L-arginine biosynthesis; L-arginine from L-ornithine and carbamoyl phosphate: step 2/3. The protein is Argininosuccinate synthase of Azorhizobium caulinodans (strain ATCC 43989 / DSM 5975 / JCM 20966 / LMG 6465 / NBRC 14845 / NCIMB 13405 / ORS 571).